A 602-amino-acid polypeptide reads, in one-letter code: T-box transcription factor TBX15 (602 aa).

The disordered stretch occupies residues 43 to 95 (SMEALSPAGPLGDTDDPATHGLEPHPDSEQSTGSDSEVLTERTSCSFSTHTDL). The span at 71–94 (EQSTGSDSEVLTERTSCSFSTHTD) shows a compositional bias: polar residues. The segment at residues 122-304 (LWKRFHDIGT…RNPFAKGFRD (183 aa)) is a DNA-binding region (T-box). T330 is subject to Phosphothreonine. Disordered stretches follow at residues 338-369 (QKQQ…LSPS) and 425-444 (QSGT…QRTP). Residues 346–369 (GTSPTTSSTGTPSPSASSHLLSPS) show a composition bias toward low complexity.

In terms of assembly, can form a heterodimer with TBX18.

It is found in the nucleus. Functionally, probable transcriptional regulator involved in the development of the skeleton of the limb, vertebral column and head. Acts by controlling the number of mesenchymal precursor cells and chondrocytes. This Mus musculus (Mouse) protein is T-box transcription factor TBX15 (Tbx15).